A 194-amino-acid polypeptide reads, in one-letter code: Holliday junction branch migration complex subunit RuvA (194 aa).

A domain I region spans residues 1 to 64 (MIGRLRGILA…EDSVSLYGFL (64 aa)). Positions 65-140 (REGERRLFRD…RAADFSSGAP (76 aa)) are domain II. A flexible linker region spans residues 140-144 (PITGQ). A domain III region spans residues 145 to 194 (LGPDAVSEATVALQQLGYKPAEAARMAREAGAEGDEVATVIRKALQAALR).

This sequence belongs to the RuvA family. In terms of assembly, homotetramer. Forms an RuvA(8)-RuvB(12)-Holliday junction (HJ) complex. HJ DNA is sandwiched between 2 RuvA tetramers; dsDNA enters through RuvA and exits via RuvB. An RuvB hexamer assembles on each DNA strand where it exits the tetramer. Each RuvB hexamer is contacted by two RuvA subunits (via domain III) on 2 adjacent RuvB subunits; this complex drives branch migration. In the full resolvosome a probable DNA-RuvA(4)-RuvB(12)-RuvC(2) complex forms which resolves the HJ.

The protein resides in the cytoplasm. In terms of biological role, the RuvA-RuvB-RuvC complex processes Holliday junction (HJ) DNA during genetic recombination and DNA repair, while the RuvA-RuvB complex plays an important role in the rescue of blocked DNA replication forks via replication fork reversal (RFR). RuvA specifically binds to HJ cruciform DNA, conferring on it an open structure. The RuvB hexamer acts as an ATP-dependent pump, pulling dsDNA into and through the RuvAB complex. HJ branch migration allows RuvC to scan DNA until it finds its consensus sequence, where it cleaves and resolves the cruciform DNA. The protein is Holliday junction branch migration complex subunit RuvA of Xanthomonas campestris pv. campestris (strain 8004).